The chain runs to 84 residues: Exodeoxyribonuclease 7 small subunit (84 aa).

Belongs to the XseB family. As to quaternary structure, heterooligomer composed of large and small subunits.

It is found in the cytoplasm. The enzyme catalyses Exonucleolytic cleavage in either 5'- to 3'- or 3'- to 5'-direction to yield nucleoside 5'-phosphates.. In terms of biological role, bidirectionally degrades single-stranded DNA into large acid-insoluble oligonucleotides, which are then degraded further into small acid-soluble oligonucleotides. This is Exodeoxyribonuclease 7 small subunit from Bartonella bacilliformis (strain ATCC 35685 / KC583 / Herrer 020/F12,63).